The following is a 346-amino-acid chain: Cell division protein ZipA (346 aa).

Residues 1–6 (MEDLQL) lie on the Periplasmic side of the membrane. Residues 7–27 (VLFVLGAIAIVAVLVHGFWSI) form a helical membrane-spanning segment. Residues 28–346 (RRQQPKSLKD…DYLHRIRANA (319 aa)) lie on the Cytoplasmic side of the membrane. 2 disordered regions span residues 76–103 (ANEAHTPEAPAFNPYLKQEAKTQPQPVE) and 121–145 (QPDFSLQSPTAKEQHRGPKASRQEP).

Belongs to the ZipA family. Interacts with FtsZ via their C-terminal domains.

Its subcellular location is the cell inner membrane. In terms of biological role, essential cell division protein that stabilizes the FtsZ protofilaments by cross-linking them and that serves as a cytoplasmic membrane anchor for the Z ring. Also required for the recruitment to the septal ring of downstream cell division proteins. The chain is Cell division protein ZipA from Shewanella sp. (strain MR-4).